Reading from the N-terminus, the 430-residue chain is Evolutionarily conserved signaling intermediate in Toll pathway, mitochondrial (430 aa).

The transit peptide at 1–48 directs the protein to the mitochondrion; sequence MSWVQATLLARGLCRAWGGICRAALPGTSISQVPRQLPRGLHCSAAPH. The segment at 41-66 is disordered; sequence LHCSAAPHSSEQSLVSSPPEPRQRPT. Residues 47 to 56 show a composition bias toward polar residues; the sequence is PHSSEQSLVS. Residue Lys372 forms a Glycyl lysine isopeptide (Lys-Gly) (interchain with G-Cter in ubiquitin) linkage. The tract at residues 400–430 is disordered; it reads LHTSSAGLEEPPPPEDHEEDDSRQRQQQGQS. Residues 411 to 420 are compositionally biased toward acidic residues; sequence PPPEDHEEDD.

Belongs to the ECSIT family. As to quaternary structure, interacts with MAP3K1, SMAD4 and TRAF6. Interacts with SMAD1 only after BMP4-treatment. Part of the mitochondrial complex I assembly/MCIA complex that comprises at least the core subunits TMEM126B, NDUFAF1, ECSIT and ACAD9 and complement subunits such as COA1 and TMEM186. Interacts with NDUFAF1. Interacts with ACAD9. Interacts with TRIM59. Interacts with TMEM70 and TMEM242. Interacts (when ubiquitinated) with NF-kappa-B subunits RELA and NFKB1. Interacts with RIGI, IFIT1 and MAVS; these interactions promote RLR-mediated type I IFN induction. Interacts with SQSTM1; this interaction inhibits TLR4 signaling via functional regulation of the TRAF6-ECSIT complex. Interacts with cereblon/CRBN; this interaction inhibits the ubiquitination of ECSIT. Post-translationally, ubiquitinated on Lys-372; leading to translocation in the nucleus together with RELA and NFKB1 and expression of NF-kappa-B-dependent genes.

Its subcellular location is the cytoplasm. The protein localises to the nucleus. The protein resides in the mitochondrion. Functionally, adapter protein that plays a role in different signaling pathways including TLRs and IL-1 pathways or innate antiviral induction signaling. Plays a role in the activation of NF-kappa-B by forming a signal complex with TRAF6 and TAK1/MAP3K7 to activate TAK1/MAP3K7 leading to activation of IKKs. Once ubiquitinated, interacts with the dissociated RELA and NFKB1 proteins and translocates to the nucleus where it induces NF-kappa-B-dependent gene expression. Plays a role in innate antiviral immune response by bridging the pattern recognition receptors RIGI and MDA5/IFIT1 to the MAVS complex at the mitochondrion. Promotes proteolytic activation of MAP3K1. Involved in the BMP signaling pathway. Required for normal embryonic development. Its function is as follows. As part of the MCIA complex, involved in the assembly of the mitochondrial complex I. The protein is Evolutionarily conserved signaling intermediate in Toll pathway, mitochondrial of Macaca fascicularis (Crab-eating macaque).